Consider the following 754-residue polypeptide: 5-methyltetrahydropteroyltriglutamate--homocysteine methyltransferase (754 aa).

Residues 15–18 (RELK) and K114 contribute to the 5-methyltetrahydropteroyltri-L-glutamate site. L-homocysteine is bound by residues 430-432 (IGS) and E483. Residues 430–432 (IGS) and E483 each bind L-methionine. 5-methyltetrahydropteroyltri-L-glutamate contacts are provided by residues 514–515 (RC) and W560. D598 lines the L-homocysteine pocket. D598 provides a ligand contact to L-methionine. E604 is a 5-methyltetrahydropteroyltri-L-glutamate binding site. Zn(2+) contacts are provided by H641, C643, and E665. Catalysis depends on H694, which acts as the Proton donor. C726 provides a ligand contact to Zn(2+).

This sequence belongs to the vitamin-B12 independent methionine synthase family. The cofactor is Zn(2+).

The catalysed reaction is 5-methyltetrahydropteroyltri-L-glutamate + L-homocysteine = tetrahydropteroyltri-L-glutamate + L-methionine. It functions in the pathway amino-acid biosynthesis; L-methionine biosynthesis via de novo pathway; L-methionine from L-homocysteine (MetE route): step 1/1. In terms of biological role, catalyzes the transfer of a methyl group from 5-methyltetrahydrofolate to homocysteine resulting in methionine formation. This Campylobacter jejuni subsp. doylei (strain ATCC BAA-1458 / RM4099 / 269.97) protein is 5-methyltetrahydropteroyltriglutamate--homocysteine methyltransferase.